We begin with the raw amino-acid sequence, 367 residues long: Homoserine O-acetyltransferase (367 aa).

The AB hydrolase-1 domain maps to 44–350 (NVIMVEHAWT…AYGHDAFLLE (307 aa)). Serine 150 functions as the Nucleophile in the catalytic mechanism. Position 217 (arginine 217) interacts with substrate. Catalysis depends on residues aspartate 311 and histidine 344. Aspartate 345 provides a ligand contact to substrate.

It belongs to the AB hydrolase superfamily. MetX family. In terms of assembly, homodimer.

It localises to the cytoplasm. The enzyme catalyses L-homoserine + acetyl-CoA = O-acetyl-L-homoserine + CoA. It functions in the pathway amino-acid biosynthesis; L-methionine biosynthesis via de novo pathway; O-acetyl-L-homoserine from L-homoserine: step 1/1. Functionally, transfers an acetyl group from acetyl-CoA to L-homoserine, forming acetyl-L-homoserine. In vitro, can also use propionyl-CoA or butiryl-CoA as acyl donor. The polypeptide is Homoserine O-acetyltransferase (Trichlorobacter lovleyi (strain ATCC BAA-1151 / DSM 17278 / SZ) (Geobacter lovleyi)).